The sequence spans 225 residues: Membrane protein (225 aa).

Residues 1–20 (MSNETNCTLDFEQSVELFKE) are Virion surface-facing. Residues 21–41 (YNLFITAFLLFLTIILQYGYA) form a helical membrane-spanning segment. The Intravirion segment spans residues 42 to 51 (TRSKFIYILK). The chain crosses the membrane as a helical span at residues 52–72 (MIVLWCFWPLNIAVGVISCIY). Residues 73–77 (PPNTG) lie on the Virion surface side of the membrane. The helical transmembrane segment at 78-98 (GLVAAIILTVFACLSFVGYWI) threads the bilayer. The Intravirion portion of the chain corresponds to 99–225 (QSIRLFKRCR…VATGGSSLYT (127 aa)).

This sequence belongs to the gammacoronaviruses M protein family. In terms of assembly, homomultimer. Interacts with envelope E protein in the budding compartment of the host cell, which is located between endoplasmic reticulum and the Golgi complex. Forms a complex with HE and S proteins. Interacts with nucleocapsid N protein. This interaction probably participates in RNA packaging into the virus.

It localises to the virion membrane. Its subcellular location is the host Golgi apparatus membrane. Functionally, component of the viral envelope that plays a central role in virus morphogenesis and assembly via its interactions with other viral proteins. This Gallus gallus (Chicken) protein is Membrane protein.